The sequence spans 129 residues: Small ribosomal subunit protein uS11 (129 aa).

The segment at 109–129 (VDDTPVPHNGCRPKKKFRKAS) is disordered. Basic residues predominate over residues 119-129 (CRPKKKFRKAS).

It belongs to the universal ribosomal protein uS11 family. As to quaternary structure, part of the 30S ribosomal subunit. Interacts with proteins S7 and S18. Binds to the C-terminus of IF-3; however exactly how IF-3 interacts with the 30S subunit is unclear.

In terms of biological role, located on the upper part of the platform of the 30S subunit, where it bridges several disparate RNA helices of the 16S rRNA. Forms part of the Shine-Dalgarno cleft in the 70S ribosome. The polypeptide is Small ribosomal subunit protein uS11 (rpsK) (Thermus thermophilus (strain ATCC BAA-163 / DSM 7039 / HB27)).